The chain runs to 561 residues: MGFSFVTNAAIAAHMPPSKQEIIRRDAKFHPTIWGDHFIQYLDTPIDPPQKVVERMEELKKQVRAMLRDTNLDISLIDWIQRTGIAYHFEEQIAETLKHVYEASTLTTDSSKYLEHFDLRHIALRFRLSRQQGYHASTDVFKRFMDEGDKFKQSIANDIEGMLSLYEASFMSVKGEAILDEALAFTGKNLEATLPNLTGSLAQQVECALEIPLRRCTDLVKARRSISCYENKNGRNEVVLELAKLDFNLLQAVHQRELALLTSWWNELGASTNLPFTRNRVVELYFWVLEVLSKPEHARAREIMVKSIIMASILDDVYDVYGTLEELQLFTSALERWDLQALEQLPNTIKTAYSIVLRVFKEYEDLLKPHEVYRVGFARKALIPYMNAYFLEAKWFYSHHHPSFEEYMDNALVSCGYPFLFLVSLVGLDEIATKDVFEWAIKRPNIVVAASMICRNRDDIVGHKEEQERGDVPSGVECYTKDHGCTEEEACMALQAMVDDAWKDINCELLHDTSMPKAILMRAVGLARIISILYQYRDGYSDSTHETKAHVTQVLVQPIPL.

Aspartate 315, aspartate 319, aspartate 458, and glutamate 466 together coordinate Mg(2+). The DDXXD motif signature appears at 315 to 319; that stretch reads DDVYD.

The protein belongs to the terpene synthase family. Tpsa subfamily. The cofactor is Mg(2+). Mn(2+) serves as cofactor. Mostly expressed in stems amd leaves, and, to a lower extent, in roots and fruits.

It carries out the reaction (2E,6E)-farnesyl diphosphate = germacrene D + diphosphate. The catalysed reaction is (2E,6E)-farnesyl diphosphate = alpha-copaene + diphosphate. It participates in secondary metabolite biosynthesis; terpenoid biosynthesis. Functionally, sesquiterpene synthase involved in the biosynthesis of volatile compounds that contribute to the characteristic flavors of black pepper. Mediates the conversion of (2E,6E)-farnesyl diphosphate (FPP) into alpha-copaene and germacrene D. This is Terpene synthase 3 from Piper nigrum (Black pepper).